The primary structure comprises 209 residues: Kynurenine formamidase (209 aa).

Residue Trp19 coordinates substrate. Zn(2+) is bound by residues His49, His53, and Asp55. Catalysis depends on His59, which acts as the Proton donor/acceptor. Residues His160 and Glu172 each contribute to the Zn(2+) site.

It belongs to the Cyclase 1 superfamily. KynB family. Homodimer. It depends on Zn(2+) as a cofactor.

It carries out the reaction N-formyl-L-kynurenine + H2O = L-kynurenine + formate + H(+). Its pathway is amino-acid degradation; L-tryptophan degradation via kynurenine pathway; L-kynurenine from L-tryptophan: step 2/2. Its function is as follows. Catalyzes the hydrolysis of N-formyl-L-kynurenine to L-kynurenine, the second step in the kynurenine pathway of tryptophan degradation. This is Kynurenine formamidase from Ralstonia nicotianae (strain ATCC BAA-1114 / GMI1000) (Ralstonia solanacearum).